The chain runs to 229 residues: Enolase-phosphatase E1 (229 aa).

The segment at 207–229 (RDPASHHPQVQRFDDIHPEQIPA) is disordered. Residues 218–229 (RFDDIHPEQIPA) are compositionally biased toward basic and acidic residues.

Belongs to the HAD-like hydrolase superfamily. MasA/MtnC family. Monomer. Mg(2+) is required as a cofactor.

It catalyses the reaction 5-methylsulfanyl-2,3-dioxopentyl phosphate + H2O = 1,2-dihydroxy-5-(methylsulfanyl)pent-1-en-3-one + phosphate. It participates in amino-acid biosynthesis; L-methionine biosynthesis via salvage pathway; L-methionine from S-methyl-5-thio-alpha-D-ribose 1-phosphate: step 3/6. It functions in the pathway amino-acid biosynthesis; L-methionine biosynthesis via salvage pathway; L-methionine from S-methyl-5-thio-alpha-D-ribose 1-phosphate: step 4/6. In terms of biological role, bifunctional enzyme that catalyzes the enolization of 2,3-diketo-5-methylthiopentyl-1-phosphate (DK-MTP-1-P) into the intermediate 2-hydroxy-3-keto-5-methylthiopentenyl-1-phosphate (HK-MTPenyl-1-P), which is then dephosphorylated to form the acireductone 1,2-dihydroxy-3-keto-5-methylthiopentene (DHK-MTPene). The chain is Enolase-phosphatase E1 from Klebsiella pneumoniae (strain 342).